A 331-amino-acid chain; its full sequence is Protoheme IX farnesyltransferase (331 aa).

The next 9 helical transmembrane spans lie at 22-42, 50-70, 100-120, 147-167, 174-194, 220-240, 241-261, 273-293, and 307-327; these read LVKP…MWMA, FGVT…INMV, FAGI…NLLA, IVIG…AATG, WVMF…LAIL, ILLY…PLHV, LGSF…WKAV, ATSL…AMGL, and LASL…LGAM.

It belongs to the UbiA prenyltransferase family. Protoheme IX farnesyltransferase subfamily.

The protein resides in the cell inner membrane. The enzyme catalyses heme b + (2E,6E)-farnesyl diphosphate + H2O = Fe(II)-heme o + diphosphate. It participates in porphyrin-containing compound metabolism; heme O biosynthesis; heme O from protoheme: step 1/1. In terms of biological role, converts heme B (protoheme IX) to heme O by substitution of the vinyl group on carbon 2 of heme B porphyrin ring with a hydroxyethyl farnesyl side group. The chain is Protoheme IX farnesyltransferase from Synechococcus sp. (strain JA-3-3Ab) (Cyanobacteria bacterium Yellowstone A-Prime).